We begin with the raw amino-acid sequence, 341 residues long: Glycerol-3-phosphate dehydrogenase [NAD(P)+] (341 aa).

NADPH is bound by residues Ser-14, Phe-15, Arg-35, and Lys-108. Residues Lys-108 and Gly-136 each contribute to the sn-glycerol 3-phosphate site. Ala-140 contributes to the NADPH binding site. Residues Lys-191, Asp-244, Ser-254, Arg-255, and Asn-256 each coordinate sn-glycerol 3-phosphate. Lys-191 acts as the Proton acceptor in catalysis. An NADPH-binding site is contributed by Arg-255. Positions 279 and 281 each coordinate NADPH.

The protein belongs to the NAD-dependent glycerol-3-phosphate dehydrogenase family.

Its subcellular location is the cytoplasm. The catalysed reaction is sn-glycerol 3-phosphate + NAD(+) = dihydroxyacetone phosphate + NADH + H(+). It carries out the reaction sn-glycerol 3-phosphate + NADP(+) = dihydroxyacetone phosphate + NADPH + H(+). It functions in the pathway membrane lipid metabolism; glycerophospholipid metabolism. Functionally, catalyzes the reduction of the glycolytic intermediate dihydroxyacetone phosphate (DHAP) to sn-glycerol 3-phosphate (G3P), the key precursor for phospholipid synthesis. The sequence is that of Glycerol-3-phosphate dehydrogenase [NAD(P)+] from Pseudomonas syringae pv. tomato (strain ATCC BAA-871 / DC3000).